Here is a 484-residue protein sequence, read N- to C-terminus: Calcium-dependent protein kinase 31 (484 aa).

The N-myristoyl glycine moiety is linked to residue Gly-2. Residues Tyr-28–Met-290 enclose the Protein kinase domain. ATP contacts are provided by residues Leu-34–Thr-42 and Lys-57. Asp-156 (proton acceptor) is an active-site residue. Ser-196 carries the phosphoserine modification. Residues Ala-295 to Ile-325 are autoinhibitory domain. EF-hand domains are found at residues Glu-332 to Asn-367, Leu-368 to Leu-403, Asp-404 to Gly-439, and Ile-444 to Leu-474. The Ca(2+) site is built by Asp-345, Asp-347, Ser-349, Thr-351, Glu-356, Asp-381, Asp-383, Asn-385, Thr-387, Glu-392, Asp-417, Asp-419, Asp-421, His-423, Glu-428, Asp-452, Asp-454, Asp-456, Lys-458, and Glu-463.

It belongs to the protein kinase superfamily. Ser/Thr protein kinase family. CDPK subfamily.

It is found in the membrane. It carries out the reaction L-seryl-[protein] + ATP = O-phospho-L-seryl-[protein] + ADP + H(+). It catalyses the reaction L-threonyl-[protein] + ATP = O-phospho-L-threonyl-[protein] + ADP + H(+). Activated by calcium. Autophosphorylation may play an important role in the regulation of the kinase activity. May play a role in signal transduction pathways that involve calcium as a second messenger. The sequence is that of Calcium-dependent protein kinase 31 (CPK31) from Arabidopsis thaliana (Mouse-ear cress).